Reading from the N-terminus, the 469-residue chain is Tubulin gamma-2 chain (469 aa).

142-148 (AGGTGSG) is a GTP binding site.

It belongs to the tubulin family.

It is found in the cytoplasm. Its subcellular location is the cytoskeleton. The protein localises to the microtubule organizing center. Its function is as follows. Tubulin is the major constituent of microtubules. The gamma chain is found at microtubule organizing centers (MTOC) such as the spindle poles, suggesting that it is involved in the minus-end nucleation of microtubule assembly. This is Tubulin gamma-2 chain (TUBG2) from Oryza sativa subsp. japonica (Rice).